Reading from the N-terminus, the 658-residue chain is Exoribonuclease 2 (658 aa).

The region spanning 189–530 (REDLTSLYFT…VNHRLIKQVL (342 aa)) is the RNB domain. Residues 576 to 658 (AVEFDCEIAD…ETRSIVGNII (83 aa)) enclose the S1 motif domain.

It belongs to the RNR ribonuclease family. RNase II subfamily.

The protein resides in the cytoplasm. It catalyses the reaction Exonucleolytic cleavage in the 3'- to 5'-direction to yield nucleoside 5'-phosphates.. In terms of biological role, involved in mRNA degradation. Hydrolyzes single-stranded polyribonucleotides processively in the 3' to 5' direction. The polypeptide is Exoribonuclease 2 (Actinobacillus pleuropneumoniae serotype 5b (strain L20)).